We begin with the raw amino-acid sequence, 263 residues long: uncharacterized protein (263 aa).

A signal peptide spans 1–22 (MEYLKRLALFISVIILTIFIMG). The N-palmitoyl cysteine moiety is linked to residue cysteine 23. Cysteine 23 carries S-diacylglycerol cysteine lipidation.

This sequence belongs to the staphylococcal tandem lipoprotein family.

The protein localises to the cell membrane. This is an uncharacterized protein from Staphylococcus aureus (strain MSSA476).